The primary structure comprises 161 residues: Cyclic pyranopterin monophosphate synthase (161 aa).

Residues 75-77 (LCH) and 113-114 (ME) contribute to the substrate site. Asp128 is a catalytic residue.

This sequence belongs to the MoaC family. Homohexamer; trimer of dimers.

The catalysed reaction is (8S)-3',8-cyclo-7,8-dihydroguanosine 5'-triphosphate = cyclic pyranopterin phosphate + diphosphate. It functions in the pathway cofactor biosynthesis; molybdopterin biosynthesis. Functionally, catalyzes the conversion of (8S)-3',8-cyclo-7,8-dihydroguanosine 5'-triphosphate to cyclic pyranopterin monophosphate (cPMP). This Enterobacter sp. (strain 638) protein is Cyclic pyranopterin monophosphate synthase.